We begin with the raw amino-acid sequence, 282 residues long: Chorismate dehydratase (282 aa).

This sequence belongs to the MqnA/MqnD family. MqnA subfamily.

It carries out the reaction chorismate = 3-[(1-carboxyvinyl)-oxy]benzoate + H2O. The protein operates within quinol/quinone metabolism; menaquinone biosynthesis. Catalyzes the dehydration of chorismate into 3-[(1-carboxyvinyl)oxy]benzoate, a step in the biosynthesis of menaquinone (MK, vitamin K2). The protein is Chorismate dehydratase of Streptomyces coelicolor (strain ATCC BAA-471 / A3(2) / M145).